The sequence spans 241 residues: Probable 2-phosphosulfolactate phosphatase (241 aa).

It belongs to the ComB family. Requires Mg(2+) as cofactor.

The enzyme catalyses (2R)-O-phospho-3-sulfolactate + H2O = (2R)-3-sulfolactate + phosphate. The polypeptide is Probable 2-phosphosulfolactate phosphatase (Caldanaerobacter subterraneus subsp. tengcongensis (strain DSM 15242 / JCM 11007 / NBRC 100824 / MB4) (Thermoanaerobacter tengcongensis)).